The primary structure comprises 363 residues: RNA polymerase II holoenzyme cyclin-like subunit (363 aa).

The Cyclin N-terminal domain occupies 53 to 143 (YQMLRLAKNL…IGECEFWLIS (91 aa)). A disordered region spans residues 252-312 (TPGGSGSPAM…SPQKEKSKLQ (61 aa)). Residues 265–276 (IQQNPPNQAYQL) show a composition bias toward polar residues. The segment covering 277–298 (TPQQQEMFRQQQMQQQNRQPET) has biased composition (low complexity). Over residues 299–310 (QAKDSPQKEKSK) the composition is skewed to basic and acidic residues.

Belongs to the cyclin family. Cyclin C subfamily. Component of the SRB8-11 complex, a regulatory module of the Mediator complex.

It is found in the nucleus. Functionally, component of the SRB8-11 complex. The SRB8-11 complex is a regulatory module of the Mediator complex which is itself involved in regulation of basal and activated RNA polymerase II-dependent transcription. The SRB8-11 complex may be involved in the transcriptional repression of a subset of genes regulated by Mediator. It may inhibit the association of the Mediator complex with RNA polymerase II to form the holoenzyme complex. The SRB8-11 complex phosphorylates the C-terminal domain (CTD) of the largest subunit of RNA polymerase II. This is RNA polymerase II holoenzyme cyclin-like subunit (SSN8) from Pyricularia oryzae (strain 70-15 / ATCC MYA-4617 / FGSC 8958) (Rice blast fungus).